An 84-amino-acid polypeptide reads, in one-letter code: Cell division topological specificity factor (84 aa).

The protein belongs to the MinE family.

Prevents the cell division inhibition by proteins MinC and MinD at internal division sites while permitting inhibition at polar sites. This ensures cell division at the proper site by restricting the formation of a division septum at the midpoint of the long axis of the cell. The chain is Cell division topological specificity factor from Pseudomonas fluorescens (strain ATCC BAA-477 / NRRL B-23932 / Pf-5).